We begin with the raw amino-acid sequence, 127 residues long: Thioredoxin domain-containing protein 8 (127 aa).

The Thioredoxin domain maps to 1–92 (MVQIIKDTNE…SQKVTLFSRI (92 aa)). A disulfide bond links C32 and C35.

Belongs to the thioredoxin family. In terms of tissue distribution, testis-specific. Only expressed during spermiogenesis, prominently in the Golgi apparatus of pachytene spermatocytes and round and elongated spermatids, with a transient localization in the developing acrosome of round spermatids (at protein level).

The protein localises to the cytoplasm. The protein resides in the golgi apparatus. Functionally, may be required for post-translational modifications of proteins required for acrosomal biogenesis. May act by reducing disulfide bonds within the sperm. This chain is Thioredoxin domain-containing protein 8 (TXNDC8), found in Homo sapiens (Human).